Consider the following 319-residue polypeptide: 1-aminocyclopropane-1-carboxylate oxidase (319 aa).

One can recognise a Fe2OG dioxygenase domain in the interval 152–253; it reads GPNFGSKVSN…RMSLASFYNP (102 aa). Residues His-177, Asp-179, and His-234 each contribute to the Fe cation site.

It belongs to the iron/ascorbate-dependent oxidoreductase family. Fe cation is required as a cofactor.

The enzyme catalyses 1-aminocyclopropane-1-carboxylate + L-ascorbate + O2 = ethene + L-dehydroascorbate + hydrogen cyanide + CO2 + 2 H2O. Its pathway is alkene biosynthesis; ethylene biosynthesis via S-adenosyl-L-methionine; ethylene from S-adenosyl-L-methionine: step 2/2. This chain is 1-aminocyclopropane-1-carboxylate oxidase (ACO), found in Nicotiana tabacum (Common tobacco).